The primary structure comprises 96 residues: Protein RnfH (96 aa).

This sequence belongs to the UPF0125 (RnfH) family.

In Hahella chejuensis (strain KCTC 2396), this protein is Protein RnfH.